We begin with the raw amino-acid sequence, 483 residues long: L-2-hydroxyglutarate dehydrogenase, mitochondrial (483 aa).

Residues 1 to 67 (MKHKPETAAF…VDASKTIVRG (67 aa)) constitute a mitochondrion transit peptide.

This sequence belongs to the L2HGDH family. It depends on FAD as a cofactor.

Its subcellular location is the mitochondrion. It catalyses the reaction (S)-2-hydroxyglutarate + A = 2-oxoglutarate + AH2. In terms of biological role, catalyzes the oxidation of (S)-2-hydroxyglutarate to 2-oxoglutarate. Is specific for the (S) enantiomer and possesses very poor activity toward (R)-2-hydroxyglutarate. Has no activity toward related 2-hydroxy acids, such as glycolate, L-lactate or D-lactate. This is L-2-hydroxyglutarate dehydrogenase, mitochondrial from Arabidopsis thaliana (Mouse-ear cress).